The primary structure comprises 1402 residues: Transcription factor SPT20 homolog (1402 aa).

7 disordered regions span residues 1-29, 60-107, 114-133, 177-206, 786-817, 1136-1174, and 1199-1250; these read MNGN…EQEQ, VNSL…LDTD, NNDS…SSSS, QTTL…NNIL, APST…PTPV, PQQI…QYQT, and QPLQ…PPQI. Positions 7 to 29 are enriched in basic and acidic residues; the sequence is VHTEENKNEHQQEGKGGEQEQEQ. Over residues 60–72 the composition is skewed to polar residues; it reads VNSLSEPTPNEQQ. Over residues 73 to 102 the composition is skewed to low complexity; the sequence is NNNNNNNSNGNGNGNDETTSSKTTTIINSN. 6 stretches are compositionally biased toward low complexity: residues 183–204, 786–812, 1136–1150, 1157–1174, 1199–1218, and 1226–1250; these read NNNN…NNNN, APST…TTPT, PQQI…PPNQ, SPQS…QYQT, QPLQ…QQQQ, and PQQF…PPQI.

This sequence belongs to the SPT20 family.

The sequence is that of Transcription factor SPT20 homolog from Dictyostelium discoideum (Social amoeba).